Reading from the N-terminus, the 333-residue chain is Malate dehydrogenase (333 aa).

Residues 10 to 15 (GGGQIG) and aspartate 34 each bind NAD(+). Positions 83 and 89 each coordinate substrate. NAD(+) contacts are provided by residues asparagine 96 and 119–121 (ITN). Substrate is bound by residues asparagine 121 and arginine 152. Histidine 176 (proton acceptor) is an active-site residue.

This sequence belongs to the LDH/MDH superfamily. MDH type 3 family.

The enzyme catalyses (S)-malate + NAD(+) = oxaloacetate + NADH + H(+). In terms of biological role, catalyzes the reversible oxidation of malate to oxaloacetate. This chain is Malate dehydrogenase, found in Parvibaculum lavamentivorans (strain DS-1 / DSM 13023 / NCIMB 13966).